The chain runs to 112 residues: Notch-regulated ankyrin repeat-containing protein A (112 aa).

2 ANK repeats span residues 48-77 (EGQT…DIRL) and 81-110 (EGWS…YSSG).

This sequence belongs to the NRARP family.

In terms of biological role, regulates independently canonical Wnt and Notch signaling by modulating LEF1 and Notch protein turnover. Stabilizes LEF1, a pivotal transcription factor in the Wnt signaling cascade, by blocking its ubiquitination. Involved in angiogenesis; involved in intersegmental vessel patterning during development. This Danio rerio (Zebrafish) protein is Notch-regulated ankyrin repeat-containing protein A (nrarpa).